The sequence spans 426 residues: MNRNEILFDRAKAIIPGGVNSPVRAFGSVGGVPRFIKKAEGAYVWDENGTRYTDYVGSWGPAIVGHAHPEVVEAVREAALGGLSFGAPTEGEIAIAEQIAEIMPSVERLRLVSSGTEATMTAIRLARGFTGRDKIIKFEGCYHGHSDSLLVKAGSGLLTFGNPSSAGVPADFTKHTLVLEYNNIAQLEEAFAQSGDEIACVIVEPFVGNMNLVRPTEAFVKALRGLTEKHGAVLIYDEVMTGFRVALGGAQSLHGITPDLTTMGKVIGGGMPLAAFGGRKDIMECISPLGGVYQAGTLSGNPIAVAAGLKTLEIIQREGFYENLTALTQRLANGIAAAKAHGIEFAADSVGGMFGLYFAAHVPRNYADMARSNIDAFKRFFHGMLDRGIAFGPSAYEAGFVSAAHTPELIDETVAVAVEVFKAMAA.

Lys-265 bears the N6-(pyridoxal phosphate)lysine mark.

Belongs to the class-III pyridoxal-phosphate-dependent aminotransferase family. HemL subfamily. Homodimer. Requires pyridoxal 5'-phosphate as cofactor.

Its subcellular location is the cytoplasm. The catalysed reaction is (S)-4-amino-5-oxopentanoate = 5-aminolevulinate. Its pathway is porphyrin-containing compound metabolism; protoporphyrin-IX biosynthesis; 5-aminolevulinate from L-glutamyl-tRNA(Glu): step 2/2. The protein is Glutamate-1-semialdehyde 2,1-aminomutase of Neisseria gonorrhoeae (strain ATCC 700825 / FA 1090).